The chain runs to 398 residues: Putative molybdopterin biosynthesis protein MJ0666 (398 aa).

Belongs to the MoeA family.

Its pathway is cofactor biosynthesis; molybdopterin biosynthesis. The chain is Putative molybdopterin biosynthesis protein MJ0666 from Methanocaldococcus jannaschii (strain ATCC 43067 / DSM 2661 / JAL-1 / JCM 10045 / NBRC 100440) (Methanococcus jannaschii).